Here is a 125-residue protein sequence, read N- to C-terminus: Large ribosomal subunit protein uL22 (125 aa).

The protein belongs to the universal ribosomal protein uL22 family. As to quaternary structure, part of the 50S ribosomal subunit.

Its function is as follows. This protein binds specifically to 23S rRNA; its binding is stimulated by other ribosomal proteins, e.g. L4, L17, and L20. It is important during the early stages of 50S assembly. It makes multiple contacts with different domains of the 23S rRNA in the assembled 50S subunit and ribosome. The globular domain of the protein is located near the polypeptide exit tunnel on the outside of the subunit, while an extended beta-hairpin is found that lines the wall of the exit tunnel in the center of the 70S ribosome. This chain is Large ribosomal subunit protein uL22, found in Thermobifida fusca (strain YX).